The sequence spans 316 residues: Pleckstrin homology domain-containing family F member 1 homolog (316 aa).

The region spanning 35–131 (VLVGEGVLTK…WMAHINKCVE (97 aa)) is the PH domain. An FYVE-type zinc finger spans residues 152–212 (DTDASVCMHC…VCDACYERLK (61 aa)). Zn(2+) is bound by residues cysteine 158, cysteine 161, cysteine 175, cysteine 178, cysteine 183, cysteine 186, cysteine 204, and cysteine 207. Residues 215–316 (PSSLGSGEDS…AAVATTGSHC (102 aa)) are disordered. Over residues 244–253 (SNDEDSDEET) the composition is skewed to acidic residues. Low complexity predominate over residues 279–292 (SSTITSPSSATTGS). The segment covering 298-316 (VTPSVQSSPAAVATTGSHC) has biased composition (polar residues).

In terms of assembly, interacts with Gdi (Rab GDP dissociation inhibitor). In ovaries, expressed both in the germ line cells and in the overlying somatic follicular epithelium.

It localises to the apical cell membrane. Its subcellular location is the endosome membrane. The protein localises to the cytoplasm. It is found in the cell cortex. Its function is as follows. Functions in the regulation of endosome morphology and late endosome formation. Has a role in controlling trafficking from early to late endosomes and from late endosomes to lysosomes. Important for localization of Gdi to the endosomal membranes. May function in controlling the activity of multiple regulators in the endocytic pathway, perhaps by positively controlling those involved in the early steps of endocytosis such as Rab5 and hrs, and negative regulating those involved in the late stages of endocytosis like car and VhaSFD. This chain is Pleckstrin homology domain-containing family F member 1 homolog, found in Drosophila melanogaster (Fruit fly).